Here is a 494-residue protein sequence, read N- to C-terminus: Tripartite motif-containing protein 5 (494 aa).

Alanine 2 carries the N-acetylalanine modification. The RING-type zinc-finger motif lies at 15 to 59 (CPICLELLTEPLSLDCGHSFCQACITANHKESTLHQGERSCPLCR). Serine 86 carries the post-translational modification Phosphoserine. The B box-type zinc-finger motif lies at 91 to 132 (QKVDHCARHGEKLLLFCQQDGNVICWLCERSQEHRGHHTFLV). Zn(2+) contacts are provided by cysteine 96, histidine 99, cysteine 118, and histidine 124. The stretch at 132 to 223 (VEEVAEKYQG…RLVQSESDMV (92 aa)) forms a coiled coil. The segment at 186–199 (FKQLRDILDCEESK) is required for interaction with GABARAP and for autophagy. A B30.2/SPRY domain is found at 280–494 (PDLKGMLQAF…LPMTLCSPSS (215 aa)).

Belongs to the TRIM/RBCC family. In terms of assembly, can form homodimers and homotrimers. In addition to lower-order dimerization, also exhibits a higher-order multimerization and both low- and high-order multimerizations are essential for its restriction activity. Interacts with BTBD1 and BTBD2. Interacts with PSMC4, PSMC5, PSMD7 and HSPA8/HSC70. Interacts (via B30.2/SPRY domain) with HSPA1A/B. Interacts with PSMC2, MAP3K7/TAK1, TAB2 and TAB3. Interacts with SQSTM1. Interacts with TRIM6 and TRIM34. Interacts with ULK1 (phosphorylated form), GABARAP, GABARAPL1, GABARAPL2, MAP1LC3A, MAP1LC3C and BECN1. In terms of processing, degraded in a proteasome-independent fashion in the absence of viral infection but in a proteasome-dependent fashion following exposure to restriction sensitive virus. Post-translationally, autoubiquitinated in a RING finger- and UBE2D2-dependent manner. Monoubiquitinated by TRIM21. Deubiquitinated by Yersinia YopJ. Ubiquitination may not lead to proteasomal degradation.

It is found in the cytoplasm. The protein localises to the nucleus. It catalyses the reaction S-ubiquitinyl-[E2 ubiquitin-conjugating enzyme]-L-cysteine + [acceptor protein]-L-lysine = [E2 ubiquitin-conjugating enzyme]-L-cysteine + N(6)-ubiquitinyl-[acceptor protein]-L-lysine.. Its pathway is protein modification; protein ubiquitination. Capsid-specific restriction factor that prevents infection from non-host-adapted retroviruses. Blocks viral replication early in the life cycle, after viral entry but before reverse transcription. In addition to acting as a capsid-specific restriction factor, also acts as a pattern recognition receptor that activates innate immune signaling in response to the retroviral capsid lattice. Binding to the viral capsid triggers its E3 ubiquitin ligase activity, and in concert with the heterodimeric ubiquitin conjugating enzyme complex UBE2V1-UBE2N (also known as UBC13-UEV1A complex) generates 'Lys-63'-linked polyubiquitin chains, which in turn are catalysts in the autophosphorylation of the MAP3K7/TAK1 complex (includes TAK1, TAB2, and TAB3). Activation of the MAP3K7/TAK1 complex by autophosphorylation results in the induction and expression of NF-kappa-B and MAPK-responsive inflammatory genes, thereby leading to an innate immune response in the infected cell. Plays a role in regulating autophagy through activation of autophagy regulator BECN1 by causing its dissociation from its inhibitors BCL2 and TAB2. The sequence is that of Tripartite motif-containing protein 5 (TRIM5) from Cebuella pygmaea (Pygmy marmoset).